A 975-amino-acid polypeptide reads, in one-letter code: Translation initiation factor IF-2 (975 aa).

Basic and acidic residues predominate over residues 48–63 (DHLRKSHGATDGDKRK). Disordered stretches follow at residues 48–84 (DHLRKSHGATDGDKRKITLTRRHTSEIKQADATGKAR) and 98–388 (KRDD…QAPT). The segment covering 104-115 (ETGADQAQAQTD) has biased composition (low complexity). Basic and acidic residues predominate over residues 120–177 (AELKRREEEARREAELLEKQAQELRERQERLEREEAERRAREEAAEAERRRAEEEAAA). A compositionally biased stretch (low complexity) spans 178 to 211 (KRAAAAQAEAAQQAAAAREQAQRAQSEPAEQSAQ). A compositionally biased stretch (basic and acidic residues) spans 212-263 (DEARAAAERAAQREAAKKAEDAAREAADKARAEQEEIRKRREAAEAEARAIR). The segment covering 302 to 330 (KPAGEAAAARPAAKKPASGAPAPAAAPAG) has biased composition (low complexity). Gly residues predominate over residues 359-372 (SSGGVDRGWRGGPK). In terms of domain architecture, tr-type G spans 475-644 (PRPPVVTVMG…LLQAEVLELK (170 aa)). The G1 stretch occupies residues 484 to 491 (GHVDHGKT). Residue 484 to 491 (GHVDHGKT) participates in GTP binding. The segment at 509 to 513 (GITQH) is G2. The tract at residues 530–533 (DTPG) is G3. Residues 530–534 (DTPGH) and 584–587 (NKID) each bind GTP. Residues 584–587 (NKID) form a G4 region. The segment at 620–622 (SAK) is G5.

This sequence belongs to the TRAFAC class translation factor GTPase superfamily. Classic translation factor GTPase family. IF-2 subfamily.

The protein localises to the cytoplasm. In terms of biological role, one of the essential components for the initiation of protein synthesis. Protects formylmethionyl-tRNA from spontaneous hydrolysis and promotes its binding to the 30S ribosomal subunits. Also involved in the hydrolysis of GTP during the formation of the 70S ribosomal complex. The sequence is that of Translation initiation factor IF-2 from Burkholderia mallei (strain NCTC 10247).